The following is a 2971-amino-acid chain: Reticulocyte-binding protein homolog 1 (2971 aa).

The N-terminal stretch at 1–20 is a signal peptide; sequence MQRWIFCNIVLHILIYLAEF. Over 21–2897 the chain is Extracellular; the sequence is SHEQESYSSN…KKQKNGNHER (2877 aa). The interval 30–50 is disordered; that stretch reads NEKIRKDYSDDNNYEPTPSYE. N-linked (GlcNAc...) asparagine glycans are attached at residues asparagine 70, asparagine 78, asparagine 87, asparagine 135, asparagine 286, asparagine 384, and asparagine 417. Residues 500–833 form an erythrocyte binding domain (EBD) region; it reads LQIVQQKLLE…MQQGYNNLTN (334 aa). LRR repeat units lie at residues 528–553 and 607–633; these read YKNI…NIKD and LNNL…ILQK. Asparagine 685 carries N-linked (GlcNAc...) asparagine glycosylation. LRR repeat units follow at residues 736-758 and 785-808; these read IDTI…VYTD and QETL…LLKE. 4 N-linked (GlcNAc...) asparagine glycosylation sites follow: asparagine 830, asparagine 892, asparagine 1000, and asparagine 1010. LRR repeat units follow at residues 993–1018 and 1356–1381; these read LKIL…TLND and LRNI…AHKE. N-linked (GlcNAc...) asparagine glycosylation occurs at asparagine 1425. The stretch at 1466 to 1489 is one LRR 7 repeat; the sequence is AKYMENIDTYKNNIEIISKQINPE. Asparagine 1496 carries an N-linked (GlcNAc...) asparagine glycan. LRR repeat units lie at residues 1512-1537, 1586-1609, and 1611-1636; these read YKQI…ELQN, SQNI…LEEE, and EQMK…AFIN. 5 N-linked (GlcNAc...) asparagine glycosylation sites follow: asparagine 1664, asparagine 1692, asparagine 1718, asparagine 1816, and asparagine 1844. LRR repeat units follow at residues 1700–1723 and 1809–1834; these read LQEL…TIKY and LKLF…SIQN. One copy of the LRR 13 repeat lies at 1880 to 1903; it reads QNEIRNMNLEKNFMLDKSKKIDEE. N-linked (GlcNAc...) asparagine glycosylation is found at asparagine 1913 and asparagine 1918. Residues 1944 to 1967 form an LRR 14 repeat; sequence KENIEKIKQEINTLSDVFKKPFFF. 6 N-linked (GlcNAc...) asparagine glycosylation sites follow: asparagine 2054, asparagine 2207, asparagine 2289, asparagine 2300, asparagine 2338, and asparagine 2405. An LRR 15 repeat occupies 2523–2548; sequence IKDIDNVFIKIQNNKFEQIQKYIEII. N-linked (GlcNAc...) asparagine glycans are attached at residues asparagine 2598 and asparagine 2752. The LRR 16 repeat unit spans residues 2731-2754; it reads ENIFDNIQLKKKDIDDIIININNT. Composition is skewed to basic and acidic residues over residues 2773 to 2782 and 2795 to 2804; these read KVDEKSEINN and QKNKIKDHNL. 2 disordered regions span residues 2773–2825 and 2840–2862; these read KVDE…MKEQ and HHVH…LQEQ. Asparagine 2811 carries an N-linked (GlcNAc...) asparagine glycan. Positions 2814-2825 are enriched in basic and acidic residues; the sequence is EESHQNEQMKEQ. Residues 2898–2918 traverse the membrane as a helical segment; that stretch reads MYFASGIVVSILFLSSLGFVI. The Cytoplasmic segment spans residues 2919 to 2971; that stretch reads NSKNNKQEYDKEQEKQQQNDFVCDNNKMDDKSTQKYGRNQEEVMEISFDNDYI.

May in part interact with AMA1 in the moving tight junction between the parasite and the erythrocyte membranes; the interaction may facilitate junction formation and active invasion. In terms of processing, proteolytically processed into multiple fragments following schizont rupture. In the mature schizont stage prior to merozoite release, full length RH1 is processed post-Golgi into a 240 kDa N-terminal form and a 120 kDa C-terminal form containing the transmembrane region. Both forms appear not to form a complex. However, they appear to remain in close proximity in late schizonts. Following merozoite invasion of host erythrocytes, the 240 kDa form is further processed into a 140 kDa form which may be involved in the disengagement of the ligand-receptor complex required during the invasion process. Also, the 120 kDa is further cleaved into a 110 kDa form and a transmembrane 9 kDa form probably by ROM4.

The protein resides in the cell membrane. It is found in the secreted. It localises to the cell junction. Its subcellular location is the tight junction. The protein localises to the cytoplasmic vesicle. The protein resides in the secretory vesicle. It is found in the rhoptry. Its function is as follows. During the asexual blood stage, binds to a sialic acid containing receptor on the surface of the host erythrocyte and thus is involved in merozoite invasion. Binds erythrocytes via a neuraminidase sensitive and trypsin-, chymotrypsin-resistant receptor. After merozoite attachment and reorientation, RH1 binding to its erythrocyte receptor triggers an increase in intracellular Ca(2+) within the parasite resulting in the release of microneme proteins such as EBA175 which in turn leads to the formation of the tight junction between parasite and host cell. In Plasmodium falciparum (isolate 3D7), this protein is Reticulocyte-binding protein homolog 1.